The sequence spans 281 residues: HTH-type transcriptional activator RamA (281 aa).

Residues 213–278 form the HTH luxR-type domain; that stretch reads RIKQTTKLSA…EAVNAARRIG (66 aa).

Its function is as follows. RamA is a master regulator of acetate metabolism. It positively controls the expression of acnA, aceA, aceB, ack, pta and ramB genes in the presence of acetate. RamA is also a positive regulator of rpf2 gene expression during growth on glucose as the sole carbon source. The sequence is that of HTH-type transcriptional activator RamA from Corynebacterium glutamicum (strain ATCC 13032 / DSM 20300 / JCM 1318 / BCRC 11384 / CCUG 27702 / LMG 3730 / NBRC 12168 / NCIMB 10025 / NRRL B-2784 / 534).